We begin with the raw amino-acid sequence, 317 residues long: Malate dehydrogenase (317 aa).

NAD(+) contacts are provided by residues 7 to 13 and Asp34; that span reads GAAGGIG. Substrate is bound by residues Arg81 and Arg87. Residues Asn94 and 117 to 119 contribute to the NAD(+) site; that span reads VTN. 2 residues coordinate substrate: Asn119 and Arg153. The active-site Proton acceptor is His177. An NAD(+)-binding site is contributed by Met231.

It belongs to the LDH/MDH superfamily. MDH type 1 family. Homodimer.

It catalyses the reaction (S)-malate + NAD(+) = oxaloacetate + NADH + H(+). In terms of biological role, catalyzes the reversible oxidation of malate to oxaloacetate. This chain is Malate dehydrogenase, found in Actinobacillus pleuropneumoniae serotype 5b (strain L20).